Reading from the N-terminus, the 310-residue chain is Olfactory receptor 8B12 (310 aa).

Topologically, residues M1 to I24 are extracellular. N-linked (GlcNAc...) asparagine glycosylation is present at N5. The helical transmembrane segment at P25–I45 threads the bilayer. The Cytoplasmic portion of the chain corresponds to T46–H53. The helical transmembrane segment at L54–T74 threads the bilayer. Topologically, residues T75–T98 are extracellular. A disulfide bridge links C96 with C188. The chain crosses the membrane as a helical span at residues Q99–Y119. The Cytoplasmic segment spans residues D120 to Q138. A helical transmembrane segment spans residues V139–T159. Topologically, residues G160–L196 are extracellular. N-linked (GlcNAc...) asparagine glycosylation is found at N164 and N189. A helical membrane pass occupies residues V197 to S216. At Y217–A236 the chain is on the cytoplasmic side. The helical transmembrane segment at F237–M257 threads the bilayer. Over Y258 to G270 the chain is Extracellular. A helical membrane pass occupies residues K271 to L291. Over R292 to S310 the chain is Cytoplasmic.

The protein belongs to the G-protein coupled receptor 1 family.

The protein localises to the cell membrane. Odorant receptor. This Homo sapiens (Human) protein is Olfactory receptor 8B12 (OR8B12).